The following is a 286-amino-acid chain: NAD kinase (286 aa).

Aspartate 74 serves as the catalytic Proton acceptor. Residues 74-75 (DG), 148-149 (ND), aspartate 178, alanine 186, 189-194 (TAYNLS), and glutamine 244 contribute to the NAD(+) site.

The protein belongs to the NAD kinase family. It depends on a divalent metal cation as a cofactor.

Its subcellular location is the cytoplasm. The enzyme catalyses NAD(+) + ATP = ADP + NADP(+) + H(+). Involved in the regulation of the intracellular balance of NAD and NADP, and is a key enzyme in the biosynthesis of NADP. Catalyzes specifically the phosphorylation on 2'-hydroxyl of the adenosine moiety of NAD to yield NADP. The polypeptide is NAD kinase (Campylobacter jejuni (strain RM1221)).